The sequence spans 251 residues: Imidazole glycerol phosphate synthase subunit HisF (251 aa).

Active-site residues include Asp11 and Asp130.

The protein belongs to the HisA/HisF family. In terms of assembly, heterodimer of HisH and HisF.

It localises to the cytoplasm. It catalyses the reaction 5-[(5-phospho-1-deoxy-D-ribulos-1-ylimino)methylamino]-1-(5-phospho-beta-D-ribosyl)imidazole-4-carboxamide + L-glutamine = D-erythro-1-(imidazol-4-yl)glycerol 3-phosphate + 5-amino-1-(5-phospho-beta-D-ribosyl)imidazole-4-carboxamide + L-glutamate + H(+). It participates in amino-acid biosynthesis; L-histidine biosynthesis; L-histidine from 5-phospho-alpha-D-ribose 1-diphosphate: step 5/9. In terms of biological role, IGPS catalyzes the conversion of PRFAR and glutamine to IGP, AICAR and glutamate. The HisF subunit catalyzes the cyclization activity that produces IGP and AICAR from PRFAR using the ammonia provided by the HisH subunit. This is Imidazole glycerol phosphate synthase subunit HisF from Chlorobium limicola (strain DSM 245 / NBRC 103803 / 6330).